The sequence spans 277 residues: Pantothenate synthetase (277 aa).

26 to 33 (MGNLHEGH) contributes to the ATP binding site. Residue His-33 is the Proton donor of the active site. Gln-57 is a binding site for (R)-pantoate. Gln-57 lines the beta-alanine pocket. 144–147 (GKKD) provides a ligand contact to ATP. Gln-150 lines the (R)-pantoate pocket. ATP is bound by residues Gly-173 and 181–184 (LSSR).

The protein belongs to the pantothenate synthetase family. Homodimer.

Its subcellular location is the cytoplasm. The enzyme catalyses (R)-pantoate + beta-alanine + ATP = (R)-pantothenate + AMP + diphosphate + H(+). The protein operates within cofactor biosynthesis; (R)-pantothenate biosynthesis; (R)-pantothenate from (R)-pantoate and beta-alanine: step 1/1. Its function is as follows. Catalyzes the condensation of pantoate with beta-alanine in an ATP-dependent reaction via a pantoyl-adenylate intermediate. This is Pantothenate synthetase from Laribacter hongkongensis (strain HLHK9).